The sequence spans 314 residues: Ferrochelatase (314 aa).

Residues histidine 188 and glutamate 269 each contribute to the Fe cation site.

Belongs to the ferrochelatase family.

The protein resides in the cytoplasm. The enzyme catalyses heme b + 2 H(+) = protoporphyrin IX + Fe(2+). The protein operates within porphyrin-containing compound metabolism; protoheme biosynthesis; protoheme from protoporphyrin-IX: step 1/1. Catalyzes the ferrous insertion into protoporphyrin IX. The polypeptide is Ferrochelatase (Campylobacter fetus subsp. fetus (strain 82-40)).